The chain runs to 464 residues: Protein FAM90A9 (464 aa).

Disordered regions lie at residues 1 to 42 (MMAR…DPRL), 70 to 389 (PATL…HDGA), and 411 to 437 (APSF…SEAP). Composition is skewed to basic and acidic residues over residues 74 to 89 (GKKE…KPRV) and 97 to 114 (NKDK…DPQR). Low complexity predominate over residues 180 to 197 (LASLSPLRKASLSSSSSL).

This sequence belongs to the FAM90 family.

The chain is Protein FAM90A9 (FAM90A9) from Homo sapiens (Human).